Consider the following 456-residue polypeptide: DnaJ homolog dnj-10 (456 aa).

A J domain is found at 44–108 (DYYKTLGVDK…TKRQEYDAYG (65 aa)). The segment at 178–257 (GATKNVSVNV…CEGEGQTVQR (80 aa)) adopts a CR-type zinc-finger fold. CXXCXGXG motif repeat units follow at residues 208 to 215 (CPYCNGTG), 231 to 238 (CNRCRGSG), and 245 to 252 (CQECEGEG). Over residues 395–429 (KGLEKNQKTEEKETKKNEEKKSEGASESQKRRSEP) the composition is skewed to basic and acidic residues. Residues 395 to 443 (KGLEKNQKTEEKETKKNEEKKSEGASESQKRRSEPVAENAETIDENQEN) form a disordered region.

The protein is DnaJ homolog dnj-10 (dnj-10) of Caenorhabditis elegans.